The following is a 112-amino-acid chain: Large ribosomal subunit protein uL22 (112 aa).

It belongs to the universal ribosomal protein uL22 family. In terms of assembly, part of the 50S ribosomal subunit.

This protein binds specifically to 23S rRNA; its binding is stimulated by other ribosomal proteins, e.g. L4, L17, and L20. It is important during the early stages of 50S assembly. It makes multiple contacts with different domains of the 23S rRNA in the assembled 50S subunit and ribosome. In terms of biological role, the globular domain of the protein is located near the polypeptide exit tunnel on the outside of the subunit, while an extended beta-hairpin is found that lines the wall of the exit tunnel in the center of the 70S ribosome. The protein is Large ribosomal subunit protein uL22 of Nitratidesulfovibrio vulgaris (strain DSM 19637 / Miyazaki F) (Desulfovibrio vulgaris).